The chain runs to 262 residues: 3-methyl-2-oxobutanoate hydroxymethyltransferase (262 aa).

Mg(2+) contacts are provided by Asp43 and Asp82. 3-methyl-2-oxobutanoate-binding positions include Asp43–Ser44, Asp82, and Lys110. Glu112 serves as a coordination point for Mg(2+). Catalysis depends on Glu179, which acts as the Proton acceptor.

This sequence belongs to the PanB family. In terms of assembly, homodecamer; pentamer of dimers. Requires Mg(2+) as cofactor.

It is found in the cytoplasm. The catalysed reaction is 3-methyl-2-oxobutanoate + (6R)-5,10-methylene-5,6,7,8-tetrahydrofolate + H2O = 2-dehydropantoate + (6S)-5,6,7,8-tetrahydrofolate. Its pathway is cofactor biosynthesis; (R)-pantothenate biosynthesis; (R)-pantoate from 3-methyl-2-oxobutanoate: step 1/2. Functionally, catalyzes the reversible reaction in which hydroxymethyl group from 5,10-methylenetetrahydrofolate is transferred onto alpha-ketoisovalerate to form ketopantoate. This is 3-methyl-2-oxobutanoate hydroxymethyltransferase from Sodalis glossinidius (strain morsitans).